Here is a 630-residue protein sequence, read N- to C-terminus: Polygalacturonase-1 non-catalytic subunit beta (630 aa).

The first 27 residues, 1-27 (MHTKIHLPPCILLLLLFSLPSFNVVVG), serve as a signal peptide directing secretion. A propeptide spanning residues 28 to 108 (GDGESGNPFT…MCAPDLSPSL (81 aa)) is cleaved from the precursor. Asn124, Asn142, Asn256, Asn334, Asn369, and Asn387 each carry an N-linked (GlcNAc...) asparagine glycan. The propeptide occupies 398–630 (EVNGGKKVNN…ENDMTWAIAD (233 aa)). The BURP domain occupies 415-629 (FFREKMLKSG…FENDMTWAIA (215 aa)).

Interacts with polygalacturonase-2 (isoenzymes PG2A and PG2B) to form heterodimers called polygalacturonase-1 (PG1). As to expression, mostly expressed in fruit pericarp. Also detected at low levels in cell wall of roots, leaves and flowers (at protein level).

The protein resides in the secreted. Its subcellular location is the extracellular space. It is found in the apoplast. It localises to the cell wall. In terms of biological role, non-catalytic subunit of the polygalacturonase isozyme 1 (PG1). Necessary and sufficient to convert the polygalacturonase from its monomeric form PG2 to its heterodimeric form PG1. Seems to limit the depolymerization and solubilization of cell wall polyuronides mediated by PG2 during ripening, probably by recruiting PG2 to form PG1. This is Polygalacturonase-1 non-catalytic subunit beta (GP1) from Solanum lycopersicum (Tomato).